The primary structure comprises 144 residues: MKNFALAILVVTFVVAVFGNTNLDPPTRPTRLRREAEPEAEPGNNRPVYIPQPRPPHPRLRREAEPEAEPGNNRPVYIPQPRPPHPRLRREAEPEAEPGNNRPVYIPQPRPPHPRLRREAEPEAEPGNNRPVYIPQPRPPHPRI.

Positions 1-19 (MKNFALAILVVTFVVAVFG) are cleaved as a signal peptide. 4 consecutive propeptides follow at residues 20–42 (NTNL…EAEP), 63–70 (EAEPEAEP), 91–98 (EAEPEAEP), and 119–126 (EAEPEAEP). The tract at residues 20–144 (NTNLDPPTRP…PQPRPPHPRI (125 aa)) is disordered. Positions 134-144 (IPQPRPPHPRI) are enriched in pro residues.

The protein belongs to the apidaecin family.

It is found in the secreted. In terms of biological role, apidaecins have bactericidal activity; predominantly against Gram-negative bacteria. They seem to interfere with cell propagation. The protein is Apidaecins type 22 of Apis mellifera (Honeybee).